A 156-amino-acid chain; its full sequence is Small ribosomal subunit protein uS7 (156 aa).

This sequence belongs to the universal ribosomal protein uS7 family. As to quaternary structure, part of the 30S ribosomal subunit. Contacts proteins S9 and S11.

In terms of biological role, one of the primary rRNA binding proteins, it binds directly to 16S rRNA where it nucleates assembly of the head domain of the 30S subunit. Is located at the subunit interface close to the decoding center, probably blocks exit of the E-site tRNA. The chain is Small ribosomal subunit protein uS7 from Acinetobacter baumannii (strain AB307-0294).